Consider the following 1064-residue polypeptide: Bifunctional cytochrome P450/NADPH--P450 reductase ascE (1064 aa).

Residues 1–484 form a cytochrome P450 region; that stretch reads MTELIPGPKG…LHGGAKKGSK (484 aa). C411 provides a ligand contact to heme. Positions 485-1064 are NADPH-P-450 reductase; that stretch reads IDGPSSGASL…ANRYVTEIFA (580 aa). The 141-residue stretch at 504–644 folds into the Flavodoxin-like domain; the sequence is MTILYGSDSG…DFERWQDDQL (141 aa). FMN is bound by residues 510-514 and 588-620; these read SDSGT and VYGC…KRIA. Residues 676-905 enclose the FAD-binding FR-type domain; the sequence is VDADEATVQS…KPALRLFHPP (230 aa).

This sequence in the N-terminal section; belongs to the cytochrome P450 family. Requires FAD as cofactor. The cofactor is FMN. Heme serves as cofactor.

The enzyme catalyses ilicicolin A + NADPH + O2 + H(+) = ilicicolin A epoxide + NADP(+) + H2O. It participates in secondary metabolite biosynthesis; terpenoid biosynthesis. Its function is as follows. Bifunctional cytochrome P450/NADPH--P450 reductase; part of the asc-1 gene cluster that mediates the biosynthesis both ascochlorin and ascofuranone, a strong inhibitor of cyanide-insensitive alternative oxidases and a promising drug candidate against African trypanosomiasis. The first step in the pathway is performed by the non-reducing polyketide synthase ascC that produces orsellinic acid by condensing acetyl-CoA with 3 malonyl-CoA units. Orsellinic acid is then prenylated by the prenyltransferase ascA to yield ilicicolinic acid B. Ilicicolinic acid B is further reduced to ilicicolin B by the reductase ascB. The halogenase ascD then chlorinates ilicicolin B to produce ilicicolin A which is converted to ilicicolin A epoxide by the cytochrome P450 monooxygenase ascE that catalyzes stereoselective epoxidation of the terminal double bond of the prenyl group. Ilicicolin A epoxide is the last common precursor for the biosynthesis of ascofuranone and ascochlorin. The terpene cyclase ascF produces a monocyclic terpene, and the cyclization reaction is proposed to be initiated by protonation of the terminal epoxide of ilicicolin A epoxide to generate a monocyclic tertiarycation, which is followed by a series of hydride and methyl shifts with abstraction of proton, leading to the formation of the (14S,15R,19R)-trimethylcyclohexanone ring structure of ilicicolin C, which is finally reduced to ascochlorin by the dehydrogenase ascG. On the other hand, ilicicolin A epoxide is hydroxylated by the cytochrome P450 monooxygenase ascH, and the resultant product is cyclized by the terpene cyclase ascI to ascofuranol via protonation-initiated epoxide ring opening, which facilitates the 6-endo-tet cyclization to form the tetrahy-drofuran ring. Finally, ascofuranol is oxidized into ascofuranone by ascJ. This Acremonium egyptiacum (Oospora egyptiaca) protein is Bifunctional cytochrome P450/NADPH--P450 reductase ascE.